The chain runs to 641 residues: 1-deoxy-D-xylulose-5-phosphate synthase (641 aa).

Thiamine diphosphate is bound by residues H80 and 121–123 (GHS). D152 provides a ligand contact to Mg(2+). Thiamine diphosphate is bound by residues 153–154 (GS), N181, Y290, and E372. Residue N181 participates in Mg(2+) binding.

Belongs to the transketolase family. DXPS subfamily. As to quaternary structure, homodimer. Mg(2+) is required as a cofactor. The cofactor is thiamine diphosphate.

It catalyses the reaction D-glyceraldehyde 3-phosphate + pyruvate + H(+) = 1-deoxy-D-xylulose 5-phosphate + CO2. Its pathway is metabolic intermediate biosynthesis; 1-deoxy-D-xylulose 5-phosphate biosynthesis; 1-deoxy-D-xylulose 5-phosphate from D-glyceraldehyde 3-phosphate and pyruvate: step 1/1. Its function is as follows. Catalyzes the acyloin condensation reaction between C atoms 2 and 3 of pyruvate and glyceraldehyde 3-phosphate to yield 1-deoxy-D-xylulose-5-phosphate (DXP). The chain is 1-deoxy-D-xylulose-5-phosphate synthase from Rhodobacter capsulatus (Rhodopseudomonas capsulata).